A 138-amino-acid polypeptide reads, in one-letter code: Cysteine desulfuration protein SufE (138 aa).

The active-site Cysteine persulfide intermediate is the cysteine 51.

Belongs to the SufE family. In terms of assembly, homodimer. Interacts with SufS.

The protein resides in the cytoplasm. It functions in the pathway cofactor biosynthesis; iron-sulfur cluster biosynthesis. Functionally, participates in cysteine desulfuration mediated by SufS. Cysteine desulfuration mobilizes sulfur from L-cysteine to yield L-alanine and constitutes an essential step in sulfur metabolism for biosynthesis of a variety of sulfur-containing biomolecules. Functions as a sulfur acceptor for SufS, by mediating the direct transfer of the sulfur atom from the S-sulfanylcysteine of SufS, an intermediate product of cysteine desulfuration process. This Salmonella dublin (strain CT_02021853) protein is Cysteine desulfuration protein SufE.